The chain runs to 1359 residues: Tripeptidyl-peptidase 2 (1359 aa).

A disordered region spans residues 45–81 (AASTTTRGGPSPSAGVAPRAMPSSSSSPPSAAEGTTA). Over residues 64–81 (AMPSSSSSPPSAAEGTTA) the composition is skewed to low complexity. The region spanning 102–600 (EIGVDRFLAA…HGLLQVDRAF (499 aa)) is the Peptidase S8 domain. Active-site charge relay system residues include Asp-126, His-353, and Ser-539.

The protein belongs to the peptidase S8 family.

The catalysed reaction is Release of an N-terminal tripeptide from a polypeptide.. Functionally, serine protease that may function in the proteasome pathway. This is Tripeptidyl-peptidase 2 (TPP2) from Oryza sativa subsp. japonica (Rice).